A 342-amino-acid chain; its full sequence is Uroporphyrinogen decarboxylase (342 aa).

Substrate-binding positions include 21-25 (RQAGR), Asp-71, Tyr-148, Ser-203, and His-316.

The protein belongs to the uroporphyrinogen decarboxylase family. Homodimer.

Its subcellular location is the cytoplasm. It carries out the reaction uroporphyrinogen III + 4 H(+) = coproporphyrinogen III + 4 CO2. It participates in porphyrin-containing compound metabolism; protoporphyrin-IX biosynthesis; coproporphyrinogen-III from 5-aminolevulinate: step 4/4. Catalyzes the decarboxylation of four acetate groups of uroporphyrinogen-III to yield coproporphyrinogen-III. The sequence is that of Uroporphyrinogen decarboxylase from Campylobacter curvus (strain 525.92).